The chain runs to 469 residues: Zinc finger and BTB domain-containing protein 8A.1-B (469 aa).

The 69-residue stretch at 24–92 (CDCHIIVEGQ…VYSGKLPLSG (69 aa)) folds into the BTB domain. 2 consecutive C2H2-type zinc fingers follow at residues 315–337 (FKCP…LRCH) and 343–366 (YPCE…QTIH).

It localises to the nucleus. In terms of biological role, may be involved in transcriptional regulation. This is Zinc finger and BTB domain-containing protein 8A.1-B (zbtb8a.1-b) from Xenopus laevis (African clawed frog).